The sequence spans 293 residues: Pantothenate synthetase (293 aa).

ATP is bound at residue 30 to 37 (MGYLHKGH). The active-site Proton donor is His37. Residue Gln61 coordinates (R)-pantoate. Gln61 provides a ligand contact to beta-alanine. Residue 147–150 (GEKD) coordinates ATP. Residue Gln153 coordinates (R)-pantoate. Residues Val176 and 184–187 (CSSR) each bind ATP.

This sequence belongs to the pantothenate synthetase family. Homodimer.

Its subcellular location is the cytoplasm. It catalyses the reaction (R)-pantoate + beta-alanine + ATP = (R)-pantothenate + AMP + diphosphate + H(+). Its pathway is cofactor biosynthesis; (R)-pantothenate biosynthesis; (R)-pantothenate from (R)-pantoate and beta-alanine: step 1/1. Functionally, catalyzes the condensation of pantoate with beta-alanine in an ATP-dependent reaction via a pantoyl-adenylate intermediate. This Brucella canis (strain ATCC 23365 / NCTC 10854 / RM-666) protein is Pantothenate synthetase.